A 534-amino-acid polypeptide reads, in one-letter code: Peptide chain release factor 3 (534 aa).

In terms of domain architecture, tr-type G spans 9–278; sequence ARRRTFAIIS…FFVEHAPSPQ (270 aa). Residues 18 to 25, 86 to 90, and 140 to 143 each bind GTP; these read SHPDAGKT, DTPGH, and NKLD.

This sequence belongs to the TRAFAC class translation factor GTPase superfamily. Classic translation factor GTPase family. PrfC subfamily.

Its subcellular location is the cytoplasm. In terms of biological role, increases the formation of ribosomal termination complexes and stimulates activities of RF-1 and RF-2. It binds guanine nucleotides and has strong preference for UGA stop codons. It may interact directly with the ribosome. The stimulation of RF-1 and RF-2 is significantly reduced by GTP and GDP, but not by GMP. The sequence is that of Peptide chain release factor 3 from Xylella fastidiosa (strain M23).